A 102-amino-acid chain; its full sequence is Ferredoxin (102 aa).

2 consecutive 4Fe-4S ferredoxin-type domains span residues valine 45–glutamate 73 and threonine 74–lysine 102. [4Fe-4S] cluster contacts are provided by cysteine 54, cysteine 57, cysteine 60, cysteine 64, cysteine 83, cysteine 86, cysteine 89, and cysteine 93.

Requires [4Fe-4S] cluster as cofactor.

Its pathway is membrane lipid metabolism; glycerophospholipid metabolism. In terms of biological role, ferredoxin that is the specific electron donor for the geranylgeranyl reductase GGR involved in the biosynthesis of archaeal membrane lipids. The polypeptide is Ferredoxin (Methanosarcina acetivorans (strain ATCC 35395 / DSM 2834 / JCM 12185 / C2A)).